A 127-amino-acid polypeptide reads, in one-letter code: NADPH-dependent 7-cyano-7-deazaguanine reductase (127 aa).

Cys-40 serves as the catalytic Thioimide intermediate. The Proton donor role is filled by Asp-47. Residues 62 to 64 (VEL) and 81 to 82 (HE) contribute to the substrate site.

Belongs to the GTP cyclohydrolase I family. QueF type 1 subfamily.

The protein localises to the cytoplasm. It carries out the reaction 7-aminomethyl-7-carbaguanine + 2 NADP(+) = 7-cyano-7-deazaguanine + 2 NADPH + 3 H(+). Its pathway is tRNA modification; tRNA-queuosine biosynthesis. Its function is as follows. Catalyzes the NADPH-dependent reduction of 7-cyano-7-deazaguanine (preQ0) to 7-aminomethyl-7-deazaguanine (preQ1). The chain is NADPH-dependent 7-cyano-7-deazaguanine reductase from Campylobacter lari (strain RM2100 / D67 / ATCC BAA-1060).